Consider the following 171-residue polypeptide: S-ribosylhomocysteine lyase (171 aa).

Residues H54, H58, and C128 each contribute to the Fe cation site.

It belongs to the LuxS family. In terms of assembly, homodimer. It depends on Fe cation as a cofactor.

It catalyses the reaction S-(5-deoxy-D-ribos-5-yl)-L-homocysteine = (S)-4,5-dihydroxypentane-2,3-dione + L-homocysteine. In terms of biological role, involved in the synthesis of autoinducer 2 (AI-2) which is secreted by bacteria and is used to communicate both the cell density and the metabolic potential of the environment. The regulation of gene expression in response to changes in cell density is called quorum sensing. Catalyzes the transformation of S-ribosylhomocysteine (RHC) to homocysteine (HC) and 4,5-dihydroxy-2,3-pentadione (DPD). This chain is S-ribosylhomocysteine lyase, found in Edwardsiella ictaluri (strain 93-146).